Consider the following 125-residue polypeptide: Histone H2A (125 aa).

Positions 1 to 18 (MSGRGKGGKVKGKSKTRS) are enriched in basic residues. Residues 1-23 (MSGRGKGGKVKGKSKTRSSRAGL) are disordered. S2 carries the post-translational modification N-acetylserine. Residue Q104 is modified to N5-methylglutamine.

The protein belongs to the histone H2A family. As to quaternary structure, the nucleosome is a histone octamer containing two molecules each of H2A, H2B, H3 and H4 assembled in one H3-H4 heterotetramer and two H2A-H2B heterodimers. The octamer wraps approximately 147 bp of DNA.

The protein localises to the nucleus. It is found in the chromosome. In terms of biological role, core component of nucleosome. Nucleosomes wrap and compact DNA into chromatin, limiting DNA accessibility to the cellular machineries which require DNA as a template. Histones thereby play a central role in transcription regulation, DNA repair, DNA replication and chromosomal stability. DNA accessibility is regulated via a complex set of post-translational modifications of histones, also called histone code, and nucleosome remodeling. The sequence is that of Histone H2A from Sepia officinalis (Common cuttlefish).